The sequence spans 624 residues: Chaperone protein HtpG (624 aa).

An a; substrate-binding region spans residues 1–336 (MKGQETRGFQ…SSDLPLNVSR (336 aa)). The segment at 337–552 (EILQDSTVTR…ADEMSTQMAK (216 aa)) is b. Residues 553-624 (LFAAAGQKVP…IRRMNQLLVS (72 aa)) form a c region.

The protein belongs to the heat shock protein 90 family. As to quaternary structure, homodimer.

The protein localises to the cytoplasm. In terms of biological role, molecular chaperone. Has ATPase activity. The sequence is that of Chaperone protein HtpG from Shigella flexneri.